Reading from the N-terminus, the 299-residue chain is MAALRQIAFYGKGGIGKSTTSQNTLAALVELGQKILIVGCDPKADSTRLILNTKMQDTVLSLAAEAGSVEDLELEDVMKIGYKGIKCTEAGGPEPGVGCAGRGVITAINFLEENGAYEDVDYVSYDVLGDVVCGGFAMPIRENKAQEIYIVMSGEMMALYAANNIAKGILKYASSGGVRLGGLICNERQTDRELDLAEALAARLNSKLIHFVPRANIVQHAELRRQTVIEYAPDSQQAQEYRQLANKIHANSGNGTIPTPITMEELEGMLLDFGIMKTDEQALAELAEKEAAKAAAATA.

Residue 11–18 participates in ATP binding; that stretch reads GKGGIGKS. Cys-99 is a binding site for [4Fe-4S] cluster. At Arg-102 the chain carries ADP-ribosylarginine; by dinitrogenase reductase ADP-ribosyltransferase. Cys-133 provides a ligand contact to [4Fe-4S] cluster.

Belongs to the NifH/BchL/ChlL family. Homodimer. It depends on [4Fe-4S] cluster as a cofactor. The reversible ADP-ribosylation of Arg-102 inactivates the nitrogenase reductase and regulates nitrogenase activity.

The enzyme catalyses N2 + 8 reduced [2Fe-2S]-[ferredoxin] + 16 ATP + 16 H2O = H2 + 8 oxidized [2Fe-2S]-[ferredoxin] + 2 NH4(+) + 16 ADP + 16 phosphate + 6 H(+). Its function is as follows. The key enzymatic reactions in nitrogen fixation are catalyzed by the nitrogenase complex, which has 2 components: the iron protein and the molybdenum-iron protein. This is Nitrogenase iron protein from Rhodopseudomonas palustris (strain BisB5).